Consider the following 834-residue polypeptide: Leucine--tRNA ligase (834 aa).

The short motif at 40–50 is the 'HIGH' region element; that stretch reads PYPSGNIHMGH. The 'KMSKS' region motif lies at 586–590; it reads KMSKS. Lys-589 contacts ATP.

This sequence belongs to the class-I aminoacyl-tRNA synthetase family.

It localises to the cytoplasm. It carries out the reaction tRNA(Leu) + L-leucine + ATP = L-leucyl-tRNA(Leu) + AMP + diphosphate. The protein is Leucine--tRNA ligase of Nitratidesulfovibrio vulgaris (strain DSM 19637 / Miyazaki F) (Desulfovibrio vulgaris).